The chain runs to 84 residues: Small ribosomal subunit protein bS20 (84 aa).

Residues 1–22 (MPAPTKRERQNRKRFERNRSVR) form a disordered region. A compositionally biased stretch (basic residues) spans 9–22 (RQNRKRFERNRSVR).

It belongs to the bacterial ribosomal protein bS20 family.

Binds directly to 16S ribosomal RNA. The polypeptide is Small ribosomal subunit protein bS20 (Rubrobacter xylanophilus (strain DSM 9941 / JCM 11954 / NBRC 16129 / PRD-1)).